The following is a 134-amino-acid chain: MNTVFQKDKIGIGKRKRAVARVFLVPGTGTITINKVSGEKYLQYNTNYLNAIKAPLEKLNLTNQFDIVAIVRGGGLTGQTDSIKLGVARLLCKMEHENRLVLKPFGFLSRDARIKERKKYGLRKARKASQYSKR.

This sequence belongs to the universal ribosomal protein uS9 family.

It localises to the plastid. The protein resides in the chloroplast. The sequence is that of Small ribosomal subunit protein uS9c (rps9) from Thalassiosira pseudonana (Marine diatom).